A 328-amino-acid polypeptide reads, in one-letter code: D-cysteine desulfhydrase (328 aa).

K51 carries the N6-(pyridoxal phosphate)lysine modification.

The protein belongs to the ACC deaminase/D-cysteine desulfhydrase family. Homodimer. Pyridoxal 5'-phosphate is required as a cofactor.

It catalyses the reaction D-cysteine + H2O = hydrogen sulfide + pyruvate + NH4(+) + H(+). Its function is as follows. Catalyzes the alpha,beta-elimination reaction of D-cysteine and of several D-cysteine derivatives. It could be a defense mechanism against D-cysteine. This is D-cysteine desulfhydrase from Shigella flexneri serotype 5b (strain 8401).